Here is a 156-residue protein sequence, read N- to C-terminus: MPVFTHLDDDRARMVDVSAKGEVYRKAVATGTITLRPDTLSAIRDGTVVKGNVLATARVAATLAIKDTPRLIPMCHAIPVHGIDITFDYTKTGITATVTVISAGKTGVEMEALVGVSTALLTIWDMVKSAEKDEKGQYPVTGISDIRVLEKVKQDL.

Residues 74-76 (MCH) and 110-111 (ME) contribute to the substrate site. The active site involves Asp125.

This sequence belongs to the MoaC family. As to quaternary structure, homohexamer; trimer of dimers.

The catalysed reaction is (8S)-3',8-cyclo-7,8-dihydroguanosine 5'-triphosphate = cyclic pyranopterin phosphate + diphosphate. Its pathway is cofactor biosynthesis; molybdopterin biosynthesis. Its function is as follows. Catalyzes the conversion of (8S)-3',8-cyclo-7,8-dihydroguanosine 5'-triphosphate to cyclic pyranopterin monophosphate (cPMP). In Methanospirillum hungatei JF-1 (strain ATCC 27890 / DSM 864 / NBRC 100397 / JF-1), this protein is Probable cyclic pyranopterin monophosphate synthase.